We begin with the raw amino-acid sequence, 311 residues long: MDSPSGSLSPVAIDLAGVSKSYGGKIVVNDLSFTIAAGECFGLLGPNGAGKSTITRMILGMTSPSVGKITVLGAQEPGQVRLARAKIGIVSQFDNLDLEFTVRENLLVYGRYFRMSTREIETVIPSLLEFARLESKANTRVADLSGGMKRRLTLAGALINDPQLLILDEPTTGLDPHARHLIWERLRSLLARGKTILLTTHIMEEAERLCDRLCVLEAGRKIAEGRPHALIEEQIGCPVIEIYGGDPQELSLLIRPNARRLEISGETLFCYTPDPEQVRAQLRAYSNLRLLERPPNLEDVFLRLTGREMEK.

Residues 13-243 enclose the ABC transporter domain; that stretch reads IDLAGVSKSY…QIGCPVIEIY (231 aa). 45 to 52 lines the ATP pocket; sequence GPNGAGKS.

This sequence belongs to the ABC transporter superfamily. Lipooligosaccharide exporter (TC 3.A.1.102) family. In terms of assembly, the complex is composed of two ATP-binding proteins (NodI) and two transmembrane proteins (NodJ).

The protein localises to the cell inner membrane. In terms of biological role, part of the ABC transporter complex NodIJ involved in the export of the nodulation factors (Nod factors), the bacterial signal molecules that induce symbiosis and subsequent nodulation induction. Nod factors are LCO (lipo-chitin oligosaccharide), a modified beta-1,4-linked N-acetylglucosamine oligosaccharide. This subunit is responsible for energy coupling to the transport system. This is Nod factor export ATP-binding protein I from Rhizobium leguminosarum bv. viciae.